A 317-amino-acid chain; its full sequence is Protoheme IX farnesyltransferase (317 aa).

8 consecutive transmembrane segments (helical) span residues 44-64 (IGLILLTLLGGWMGAAAANTF), 93-113 (HASVFAWTLTVVSFLWLWVLC), 116-136 (VLAGLFILLTIFFYIFVYTKY), 143-163 (LNIVWGGAAGCMPVVVGWAVI), 178-198 (AIVLFMVIFFWTPPHTWALAM), 221-241 (VTRQIVWYTVATVLTTFLLIP), 243-263 (ASWIHAIIAVVSGVWFLVMAV), and 288-308 (LAVYFVGLSIDAVLGWETIGG).

The protein belongs to the UbiA prenyltransferase family. Protoheme IX farnesyltransferase subfamily.

It is found in the cell membrane. It carries out the reaction heme b + (2E,6E)-farnesyl diphosphate + H2O = Fe(II)-heme o + diphosphate. The protein operates within porphyrin-containing compound metabolism; heme O biosynthesis; heme O from protoheme: step 1/1. Functionally, converts heme B (protoheme IX) to heme O by substitution of the vinyl group on carbon 2 of heme B porphyrin ring with a hydroxyethyl farnesyl side group. This chain is Protoheme IX farnesyltransferase, found in Corynebacterium diphtheriae (strain ATCC 700971 / NCTC 13129 / Biotype gravis).